A 310-amino-acid chain; its full sequence is Ribose-phosphate pyrophosphokinase (310 aa).

Residues 33–35 (DGE) and 92–93 (RQ) each bind ATP. His127 and Asp166 together coordinate Mg(2+). Lys189 is an active-site residue. Residues Arg191, Asp215, and 219-223 (DTAGT) contribute to the D-ribose 5-phosphate site.

This sequence belongs to the ribose-phosphate pyrophosphokinase family. Class I subfamily. Homohexamer. Mg(2+) serves as cofactor.

The protein resides in the cytoplasm. The enzyme catalyses D-ribose 5-phosphate + ATP = 5-phospho-alpha-D-ribose 1-diphosphate + AMP + H(+). Its pathway is metabolic intermediate biosynthesis; 5-phospho-alpha-D-ribose 1-diphosphate biosynthesis; 5-phospho-alpha-D-ribose 1-diphosphate from D-ribose 5-phosphate (route I): step 1/1. Its function is as follows. Involved in the biosynthesis of the central metabolite phospho-alpha-D-ribosyl-1-pyrophosphate (PRPP) via the transfer of pyrophosphoryl group from ATP to 1-hydroxyl of ribose-5-phosphate (Rib-5-P). The chain is Ribose-phosphate pyrophosphokinase from Bordetella pertussis (strain Tohama I / ATCC BAA-589 / NCTC 13251).